A 290-amino-acid polypeptide reads, in one-letter code: Pyridoxal kinase PdxY (290 aa).

S14 is a binding site for substrate. 2 residues coordinate ATP: D116 and E153. D226 is a binding site for substrate.

The protein belongs to the pyridoxine kinase family. PdxY subfamily. As to quaternary structure, homodimer. Mg(2+) serves as cofactor.

It carries out the reaction pyridoxal + ATP = pyridoxal 5'-phosphate + ADP + H(+). Its pathway is cofactor metabolism; pyridoxal 5'-phosphate salvage; pyridoxal 5'-phosphate from pyridoxal: step 1/1. In terms of biological role, pyridoxal kinase involved in the salvage pathway of pyridoxal 5'-phosphate (PLP). Catalyzes the phosphorylation of pyridoxal to PLP. The chain is Pyridoxal kinase PdxY from Rubrobacter xylanophilus (strain DSM 9941 / JCM 11954 / NBRC 16129 / PRD-1).